A 212-amino-acid polypeptide reads, in one-letter code: Adenylate kinase (212 aa).

Position 10–15 (10–15 (GAGKGT)) interacts with ATP. An NMP region spans residues 30–59 (STGDMFRAAMANQTEMGVLAKSYIDKGELV). AMP is bound by residues Thr31, Arg36, 57–59 (ELV), 86–89 (GYPR), and Gln93. The segment at 127–159 (GRIIHRVTGETFHKVFNPPVDYKEEDYYQREDD) is LID. ATP-binding positions include Arg128 and 137-138 (TF). Residues Arg156 and Arg167 each coordinate AMP. An ATP-binding site is contributed by Gln195.

The protein belongs to the adenylate kinase family. Monomer.

The protein resides in the cytoplasm. It catalyses the reaction AMP + ATP = 2 ADP. It functions in the pathway purine metabolism; AMP biosynthesis via salvage pathway; AMP from ADP: step 1/1. In terms of biological role, catalyzes the reversible transfer of the terminal phosphate group between ATP and AMP. Plays an important role in cellular energy homeostasis and in adenine nucleotide metabolism. The chain is Adenylate kinase from Streptococcus pneumoniae (strain JJA).